A 399-amino-acid polypeptide reads, in one-letter code: P2X purinoceptor 1 (399 aa).

Residues 1–28 (MARRLQDELSAFFFEYDTPRMVLVRNKK) lie on the Cytoplasmic side of the membrane. Residues 29 to 50 (VGVIFRLIQLVVLVYVIGWVFV) traverse the membrane as a helical segment. The Extracellular portion of the chain corresponds to 51–338 (YEKGYQTSSG…IPTMTTIGSG (288 aa)). Residues lysine 68, lysine 70, and lysine 140 each contribute to the CTP site. Lysine 70 lines the ATP pocket. 3 disulfide bridges follow: cysteine 117/cysteine 165, cysteine 126/cysteine 149, and cysteine 132/cysteine 159. N-linked (GlcNAc...) asparagine glycans are attached at residues asparagine 153 and asparagine 184. Threonine 186 contributes to the CTP binding site. Threonine 186 contacts ATP. Asparagine 210 carries N-linked (GlcNAc...) asparagine glycosylation. Cystine bridges form between cysteine 217–cysteine 227 and cysteine 261–cysteine 270. ATP-binding residues include serine 286, asparagine 290, and arginine 292. The CTP site is built by asparagine 290 and arginine 292. The N-linked (GlcNAc...) asparagine glycan is linked to asparagine 300. Lysine 309 is a CTP binding site. Lysine 309 provides a ligand contact to ATP. The tract at residues 331-338 (TMTTIGSG) is pore-forming motif. The chain crosses the membrane as a helical span at residues 339-358 (IGIFGVATVLCDLLLLHILP). The Cytoplasmic portion of the chain corresponds to 359–399 (KRHYYKQKKFKYAEDMGPGEGERDPAATSSTLGLQENMRTS). Residues 374 to 399 (MGPGEGERDPAATSSTLGLQENMRTS) are disordered. Residues 385 to 399 (ATSSTLGLQENMRTS) are compositionally biased toward polar residues. Serine 387 and serine 388 each carry phosphoserine. At threonine 389 the chain carries Phosphothreonine.

Belongs to the P2X receptor family. In terms of assembly, functional P2XRs are organized as homomeric and heteromeric trimers. Forms heterodimer with P2RX2. Forms heterodimer with P2RX4. Forms heterodimer with P2RX5. Expressed in smooth muscle of the bladder and arteries.

Its subcellular location is the cell membrane. It carries out the reaction Ca(2+)(in) = Ca(2+)(out). The catalysed reaction is K(+)(in) = K(+)(out). The enzyme catalyses Na(+)(in) = Na(+)(out). With respect to regulation, activated by low concentrations of ATP (&lt;1 uM). Undergoes rapid desensitisation. Sensitives to the ATP agonist:alpha/beta-methylene-ATP. Modulated by cholesterol. Functionally, ATP-gated nonselective transmembrane cation channel permeable to potassium, sodium and with relatively high calcium permeability. Furthermore, CTP functions as a weak affinity agonist for P2RX1. Plays a role in male fertility, bladder contraction and platelet aggregation. Specifically, plays an important role in neurogenic contraction of smooth muscle of the vas deferens, and therefore is essential for normal male reproductive function. In addition, contributes to smooth muscle contractions of the urinary bladder. On platelets, contributes to platelet activation and aggregation and thereby, also to thrombosis. On neutrophils, it is involved in chemotaxis and in mitigating the activation of circulating cells. This is P2X purinoceptor 1 (P2rx1) from Mus musculus (Mouse).